Consider the following 567-residue polypeptide: Geranylgeranyl transferase type-2 subunit alpha (567 aa).

6 PFTA repeats span residues L44 to T78, L88 to E122, N124 to V158, P159 to P193, V207 to P241, and V363 to P397. S98 is subject to Phosphoserine. 5 LRR repeats span residues E442–L463, L464–R486, C487–P508, R509–A530, and R534–L555.

The protein belongs to the protein prenyltransferase subunit alpha family. Heterotrimer composed of RABGGTA, RABGGTB and CHM; within this trimer, RABGGTA and RABGGTB form the catalytic component B, while CHM (component A) mediates peptide substrate binding. The Rab GGTase dimer (RGGT) interacts with CHM (component A) prior to Rab protein binding; the association is stabilized by geranylgeranyl pyrophosphate (GGpp). The CHM:RGGT:Rab complex is destabilized by GGpp. Interacts with non-phosphorylated form of RAB8A; phosphorylation of RAB8A at 'Thr-72' disrupts this interaction.

It catalyses the reaction geranylgeranyl diphosphate + L-cysteinyl-[protein] = S-geranylgeranyl-L-cysteinyl-[protein] + diphosphate. With respect to regulation, the enzymatic reaction requires the aid of a Rab escort protein (also called component A), such as CHM. In terms of biological role, catalyzes the transfer of a geranylgeranyl moiety from geranylgeranyl diphosphate to both cysteines of Rab proteins with the C-terminal sequence -XXCC, -XCXC and -CCXX, such as RAB1A, RAB3A, RAB5A and RAB7A. The polypeptide is Geranylgeranyl transferase type-2 subunit alpha (RABGGTA) (Homo sapiens (Human)).